Reading from the N-terminus, the 144-residue chain is Large ribosomal subunit protein uL16 (144 aa).

Basic residues predominate over residues 1–16 (MLIPKRVKYRKQHRPR). Residues 1 to 25 (MLIPKRVKYRKQHRPRGNGGVSKGG) form a disordered region.

Belongs to the universal ribosomal protein uL16 family. In terms of assembly, part of the 50S ribosomal subunit.

In terms of biological role, binds 23S rRNA and is also seen to make contacts with the A and possibly P site tRNAs. This is Large ribosomal subunit protein uL16 from Desulforamulus reducens (strain ATCC BAA-1160 / DSM 100696 / MI-1) (Desulfotomaculum reducens).